The chain runs to 634 residues: Transmembrane and coiled-coil domain-containing protein 4 (634 aa).

A coiled-coil region spans residues 150–190 (EELDVLEEMFLESLKEIKEEESEMAEASRKKKENRRKWKRY). Transmembrane regions (helical) follow at residues 203–223 (VIGV…ATII), 231–251 (LGSA…GAGL), and 346–366 (LSGI…ANVI). A disordered region spans residues 542-612 (EPRQAAAAAS…ERPPICSHGM (71 aa)). The segment covering 552–583 (SGETPHQVGQTQGPISGDTSKLAMSTDPSQAQ) has biased composition (polar residues).

Belongs to the TMCO4 family.

The protein resides in the membrane. The polypeptide is Transmembrane and coiled-coil domain-containing protein 4 (TMCO4) (Homo sapiens (Human)).